The chain runs to 521 residues: Organic cation/carnitine transporter 6 (521 aa).

Over 1 to 37 the chain is Cytoplasmic; sequence MADPISEPLLSHLTDDSGVNEKTRLEALTFDKIVEQS. Residues 38 to 58 traverse the membrane as a helical segment; that stretch reads LSDFGFWQFFQISLVGLALLF. The Extracellular segment spans residues 59–123; sequence DAQQIFITVY…GLECSSSLLR (65 aa). Residue asparagine 79 is glycosylated (N-linked (GlcNAc...) asparagine). The helical transmembrane segment at 124–144 threads the bilayer; it reads GMPSSAFYIGAIVGGFFLALI. The Cytoplasmic portion of the chain corresponds to 145–154; it reads PDDSLGRKKL. Residues 155 to 177 form a helical membrane-spanning segment; that stretch reads VLFSTFAMSITSISVIFSTNVWI. Topologically, residues 178-182 are extracellular; the sequence is YTFLK. Residues 183–200 form a helical membrane-spanning segment; sequence FIIGFSRSQTWSYALVLI. 200–207 serves as a coordination point for ATP; the sequence is ISERVSTR. Over 201–213 the chain is Cytoplasmic; it reads SERVSTRWRPRAT. The helical transmembrane segment at 214–234 threads the bilayer; it reads MIPFTLFVLGFMSLSGIAFLA. The Extracellular segment spans residues 235–241; that stretch reads QDSSWRY. The helical transmembrane segment at 242–262 threads the bilayer; it reads LYLYTSVPAVFYCIFLYLFAL. Residues 263 to 326 lie on the Cytoplasmic side of the membrane; it reads ESPRWLHMQG…FFFRKWAFRR (64 aa). Residues 327 to 347 traverse the membrane as a helical segment; the sequence is ILVVMIIMFGLGISYYGVPLA. Over 348–356 the chain is Extracellular; the sequence is ARDIDVNIY. A helical membrane pass occupies residues 357–377; that stretch reads LSETLNALVELPTFVITPILL. The Cytoplasmic segment spans residues 378-385; that stretch reads ERFNRRSS. A helical transmembrane segment spans residues 386–406; the sequence is VLVNTLLGGASGVLCFVLSIL. Topologically, residues 407–412 are extracellular; it reads GKTEIA. The chain crosses the membrane as a helical span at residues 413–433; sequence FAFELGTFFCARIGFNLMAVF. Residues 434 to 447 lie on the Cytoplasmic side of the membrane; sequence MVEMFPTCVRSSAT. A helical membrane pass occupies residues 448–468; the sequence is MMFRQALVVGGACCPLIASIG. Topologically, residues 469-473 are extracellular; it reads RYIPS. The chain crosses the membrane as a helical span at residues 474–494; it reads VSFAIFGIAMSGLGMFVLILP. Over 495 to 521 the chain is Cytoplasmic; it reads ETKGLSLCDSMEEQEKRDQAVNTSHVC.

This sequence belongs to the major facilitator (TC 2.A.1) superfamily. Organic cation transporter (TC 2.A.1.19) family. Expressed in roots and stems. In the stem of secondary inflorescences, localized to the phloem. Also present in flowers, specifically in the stamen, in the filaments and the connective, and restricted to major veins in leaves.

It localises to the vacuole membrane. Its function is as follows. High affinity carnitine transporter involved in the active cellular uptake of carnitine. Also transports organic cations. The polypeptide is Organic cation/carnitine transporter 6 (OCT6) (Arabidopsis thaliana (Mouse-ear cress)).